The sequence spans 470 residues: MSLLVVGLNHRTAPTSLLEQASVSGDDTPKVLHDLAAAAHVNEAVVLSTCNRTEIYADVETFHGGVADISDQLSRISGIDLGDLAGHLYVHHDARAVGHLFSVVCGLDSMLVGESQILGQVRGAFRTGQSAGVAGSALSGLFQAALRVGKRAHSETSIDAAGASIVAVGIRLAASSLGILSEVPAVPVAPPGGVAGELGGAAVLAAPVAEPPPLAGARVLLIGAGAVGSLAAQTARRAGATEIVIANRTPARAARVAEMHDGRAVGLTDLPHEILMADLVISSTGATGLVVDHDLVAAALPGRGGRPLVFLDLALPHDIDPGVRALPGVSLIDLEALRVALDGAQVAHDVEAVRALVSTEVAGFLDRRRAGRVAPTVVALRAHADSVVHGELARLHSRLPDLDDREWELVEGAVRRVVDKLLHAPTVRVQQLAGAPGGDSYAEALRELFDLPREVPAVVSAPDLDLVERS.

Substrate-binding positions include 49–52, Ser-109, 114–116, and Gln-120; these read TCNR and ESQ. The Nucleophile role is filled by Cys-50. 223 to 228 lines the NADP(+) pocket; it reads GAGAVG.

It belongs to the glutamyl-tRNA reductase family. As to quaternary structure, homodimer.

The catalysed reaction is (S)-4-amino-5-oxopentanoate + tRNA(Glu) + NADP(+) = L-glutamyl-tRNA(Glu) + NADPH + H(+). It functions in the pathway porphyrin-containing compound metabolism; protoporphyrin-IX biosynthesis; 5-aminolevulinate from L-glutamyl-tRNA(Glu): step 1/2. Functionally, catalyzes the NADPH-dependent reduction of glutamyl-tRNA(Glu) to glutamate 1-semialdehyde (GSA). This Frankia alni (strain DSM 45986 / CECT 9034 / ACN14a) protein is Glutamyl-tRNA reductase.